We begin with the raw amino-acid sequence, 450 residues long: Phosphoglucosamine mutase (450 aa).

The active-site Phosphoserine intermediate is Ser-104. 4 residues coordinate Mg(2+): Ser-104, Asp-245, Asp-247, and Asp-249. At Ser-104 the chain carries Phosphoserine.

Belongs to the phosphohexose mutase family. Mg(2+) is required as a cofactor. Post-translationally, activated by phosphorylation.

It carries out the reaction alpha-D-glucosamine 1-phosphate = D-glucosamine 6-phosphate. Functionally, catalyzes the conversion of glucosamine-6-phosphate to glucosamine-1-phosphate. In Phenylobacterium zucineum (strain HLK1), this protein is Phosphoglucosamine mutase.